A 157-amino-acid chain; its full sequence is DNA gyrase inhibitor (157 aa).

Belongs to the DNA gyrase inhibitor family. As to quaternary structure, interacts with DNA gyrase.

It localises to the cytoplasm. Its function is as follows. Inhibits the supercoiling activity of DNA gyrase. Acts by inhibiting DNA gyrase at an early step, prior to (or at the step of) binding of DNA by the gyrase. It protects cells against toxins that target DNA gyrase, by inhibiting activity of these toxins and reducing the formation of lethal double-strand breaks in the cell. The chain is DNA gyrase inhibitor from Yersinia enterocolitica serotype O:8 / biotype 1B (strain NCTC 13174 / 8081).